The sequence spans 197 residues: MFSPLIDQLINSLRHLPGVGPKSAQRMALHLLERDREGAQNLSEVLAKAVEHVHRCQQCRTLTEQALCNICSNARRNRKELCIVETPADVIAIETSAVFSGYYFVLLGRLSPIDGIGPKEIGMDVLASRFAEGEIEEVIIATNPTIEGEATAHYISERAKAQGIKVSRIAHGIPIGGELEYVDGGTLAHAISRRQEI.

Residues 56–71 (CQQCRTLTEQALCNIC) form a C4-type zinc finger. Residues 79-174 (KELCIVETPA…KVSRIAHGIP (96 aa)) form the Toprim domain.

It belongs to the RecR family.

Functionally, may play a role in DNA repair. It seems to be involved in an RecBC-independent recombinational process of DNA repair. It may act with RecF and RecO. This Saccharophagus degradans (strain 2-40 / ATCC 43961 / DSM 17024) protein is Recombination protein RecR.